A 305-amino-acid chain; its full sequence is Serine/threonine-protein phosphatase 6 catalytic subunit (305 aa).

Positions 54, 56, 82, and 114 each coordinate Mn(2+). His-115 functions as the Proton donor in the catalytic mechanism. 2 residues coordinate Mn(2+): His-164 and His-238.

The protein belongs to the PPP phosphatase family. PP-6 (PP-V) subfamily. Requires Mn(2+) as cofactor.

It carries out the reaction O-phospho-L-seryl-[protein] + H2O = L-seryl-[protein] + phosphate. The enzyme catalyses O-phospho-L-threonyl-[protein] + H2O = L-threonyl-[protein] + phosphate. This is Serine/threonine-protein phosphatase 6 catalytic subunit (ppp6c) from Dictyostelium discoideum (Social amoeba).